Reading from the N-terminus, the 294-residue chain is MSDYIASALSRDEHFRIFAADATQTVREAQRRHDTWSASSAALGRTLVATALLAASGLKNADDMLTVRIKGDGPVGALVTDGTNVGTVRGYVEEPHVNLPLNLVGKIDVARAVGKRGLLAVTKDIGVGDPFTGQVPLVSGELAEDFTYYLAKSEQIPAAVGLSVFVNADNTIQVAGGFMLQALPGANDAELSELEANVKTLPLVSELLKSGLTPEQIIQRIAGDEPVQFLDAQPLKFACNCSKEHFGDIMATLPHAQLQEMIDQDGGAETTCKFCGNQYHYSVADLEALMARHE.

2 cysteine pairs are disulfide-bonded: Cys-239/Cys-241 and Cys-272/Cys-275.

This sequence belongs to the HSP33 family. In terms of processing, under oxidizing conditions two disulfide bonds are formed involving the reactive cysteines. Under reducing conditions zinc is bound to the reactive cysteines and the protein is inactive.

The protein resides in the cytoplasm. Its function is as follows. Redox regulated molecular chaperone. Protects both thermally unfolding and oxidatively damaged proteins from irreversible aggregation. Plays an important role in the bacterial defense system toward oxidative stress. This chain is 33 kDa chaperonin, found in Lacticaseibacillus casei (strain BL23) (Lactobacillus casei).